A 249-amino-acid polypeptide reads, in one-letter code: Proteasome subunit alpha 2 (249 aa).

Position 1 is an N-acetylmethionine (Met1).

It belongs to the peptidase T1A family. The 20S proteasome core is composed of 14 alpha and 14 beta subunits that assemble into four stacked heptameric rings, resulting in a barrel-shaped structure. The two inner rings, each composed of seven catalytic beta subunits, are sandwiched by two outer rings, each composed of seven alpha subunits. H.volcanii produces at least 2 types of 20S proteasomes: an alpha1-beta proteasome and a proteasome containing all three subunits (alpha1, alpha2, and beta) that appears to be asymmetrical with homo-oligomeric alpha1 and alpha2 rings positioned on separate ends. The catalytic chamber with the active sites is on the inside of the barrel. Has probably a gated structure, the ends of the cylinder being occluded by the N-termini of the alpha-subunits. Is likely capped at one or both ends by the proteasome regulatory ATPase, PAN.

The protein localises to the cytoplasm. Its activity is regulated as follows. The formation of the proteasomal ATPase PAN-20S proteasome complex, via the docking of the C-termini of PAN into the intersubunit pockets in the alpha-rings, triggers opening of the gate for substrate entry. Interconversion between the open-gate and close-gate conformations leads to a dynamic regulation of the 20S proteasome proteolysis activity. Functionally, component of the proteasome core, a large protease complex with broad specificity involved in protein degradation. The H.volcanii alpha1-beta-alpha2 proteasome is able to cleave oligopeptides after Tyr and thus displays chymotrypsin-like activity. The sequence is that of Proteasome subunit alpha 2 from Haloferax volcanii (strain ATCC 29605 / DSM 3757 / JCM 8879 / NBRC 14742 / NCIMB 2012 / VKM B-1768 / DS2) (Halobacterium volcanii).